The sequence spans 184 residues: Shikimate kinase (184 aa).

17-22 (SVGKTS) is an ATP binding site. Thr21 provides a ligand contact to Mg(2+). Positions 39 and 85 each coordinate substrate.

It belongs to the shikimate kinase family. Monomer. Mg(2+) serves as cofactor.

It is found in the cytoplasm. It catalyses the reaction shikimate + ATP = 3-phosphoshikimate + ADP + H(+). Its pathway is metabolic intermediate biosynthesis; chorismate biosynthesis; chorismate from D-erythrose 4-phosphate and phosphoenolpyruvate: step 5/7. Its function is as follows. Catalyzes the specific phosphorylation of the 3-hydroxyl group of shikimic acid using ATP as a cosubstrate. The chain is Shikimate kinase from Chlamydia muridarum (strain MoPn / Nigg).